Here is a 279-residue protein sequence, read N- to C-terminus: Putative pyruvate, phosphate dikinase regulatory protein (279 aa).

ADP is bound at residue 153–160; sequence GVSRTSKT.

This sequence belongs to the pyruvate, phosphate/water dikinase regulatory protein family. PDRP subfamily.

It carries out the reaction N(tele)-phospho-L-histidyl/L-threonyl-[pyruvate, phosphate dikinase] + ADP = N(tele)-phospho-L-histidyl/O-phospho-L-threonyl-[pyruvate, phosphate dikinase] + AMP + H(+). The catalysed reaction is N(tele)-phospho-L-histidyl/O-phospho-L-threonyl-[pyruvate, phosphate dikinase] + phosphate + H(+) = N(tele)-phospho-L-histidyl/L-threonyl-[pyruvate, phosphate dikinase] + diphosphate. Functionally, bifunctional serine/threonine kinase and phosphorylase involved in the regulation of the pyruvate, phosphate dikinase (PPDK) by catalyzing its phosphorylation/dephosphorylation. The protein is Putative pyruvate, phosphate dikinase regulatory protein of Rhodopseudomonas palustris (strain BisA53).